Reading from the N-terminus, the 546-residue chain is MATAQLATFKIPPVSNEPMLSYAPGSPERAGLQAALAEMQSQLPFEVPCIINGQEVRTNNIQKQPMPHDHARHLCTFHEGSPELVEKATCGALQAKDGWETMPWNDRAAIFLKAADLASGKYRYKLMAATMLGQGKNTWQAEIDAAAELADFFRFGVSYVEELYAQQPPKNAPGCWNRTEYRPLEGFVLAVSPFNFTAIGGNLPGSPALVGNVVVWKPAPAATYSNYLVFKILSEAGVPPGVIQFIPGGAEIVQAAIQSPNFRSLHFTGSTNVFKSLWKDISSNLDKYKVYPRIVGETGGKNWHVIHKSAEVRNAVLQSVRGAFEYQGQKCSALSRLYVSRSVWENGFKTQYLEEIAKIKVGPCLDWNNYMGPVIGRRAYDNITGFIKKAKEEGGEVLIGGSGDDSKGFFIQPTVILTKVPRSTTMVGEIFGPVVTAYVFEDSDYEKTLELIDTTSIYGLTGAIFASERQALLTATNRSRNAAGNIYYNEKCTGAVVGQQPFGGARGSGTNDKAGSISIFYRFVSARSIKENFVGLEDFHYPSNLV.

279 to 284 (KDISSN) lines the NAD(+) pocket. Glutamate 297 functions as the Proton acceptor in the catalytic mechanism. Catalysis depends on cysteine 331, which acts as the Nucleophile.

The protein belongs to the aldehyde dehydrogenase family.

Its subcellular location is the cytoplasm. It catalyses the reaction L-glutamate 5-semialdehyde + NAD(+) + H2O = L-glutamate + NADH + 2 H(+). The protein operates within amino-acid degradation; L-proline degradation into L-glutamate; L-glutamate from L-proline: step 2/2. This is Delta-1-pyrroline-5-carboxylate dehydrogenase (pruA) from Agaricus bisporus (White button mushroom).